A 335-amino-acid chain; its full sequence is Holliday junction branch migration complex subunit RuvB (335 aa).

The segment at 4 to 184 (ADRIISSNAQ…FGIVQRLEFY (181 aa)) is large ATPase domain (RuvB-L). Residues I23, R24, G65, K68, T69, T70, 131-133 (EDY), R174, Y184, and R221 each bind ATP. T69 lines the Mg(2+) pocket. The interval 185-255 (SVEDLTSIVA…IAKSALSMLD (71 aa)) is small ATPAse domain (RuvB-S). The head domain (RuvB-H) stretch occupies residues 258–335 (QAGFDYLDRK…RHFGLDKLTE (78 aa)). Residues R294, R313, and R318 each coordinate DNA.

It belongs to the RuvB family. Homohexamer. Forms an RuvA(8)-RuvB(12)-Holliday junction (HJ) complex. HJ DNA is sandwiched between 2 RuvA tetramers; dsDNA enters through RuvA and exits via RuvB. An RuvB hexamer assembles on each DNA strand where it exits the tetramer. Each RuvB hexamer is contacted by two RuvA subunits (via domain III) on 2 adjacent RuvB subunits; this complex drives branch migration. In the full resolvosome a probable DNA-RuvA(4)-RuvB(12)-RuvC(2) complex forms which resolves the HJ.

It is found in the cytoplasm. It carries out the reaction ATP + H2O = ADP + phosphate + H(+). In terms of biological role, the RuvA-RuvB-RuvC complex processes Holliday junction (HJ) DNA during genetic recombination and DNA repair, while the RuvA-RuvB complex plays an important role in the rescue of blocked DNA replication forks via replication fork reversal (RFR). RuvA specifically binds to HJ cruciform DNA, conferring on it an open structure. The RuvB hexamer acts as an ATP-dependent pump, pulling dsDNA into and through the RuvAB complex. RuvB forms 2 homohexamers on either side of HJ DNA bound by 1 or 2 RuvA tetramers; 4 subunits per hexamer contact DNA at a time. Coordinated motions by a converter formed by DNA-disengaged RuvB subunits stimulates ATP hydrolysis and nucleotide exchange. Immobilization of the converter enables RuvB to convert the ATP-contained energy into a lever motion, pulling 2 nucleotides of DNA out of the RuvA tetramer per ATP hydrolyzed, thus driving DNA branch migration. The RuvB motors rotate together with the DNA substrate, which together with the progressing nucleotide cycle form the mechanistic basis for DNA recombination by continuous HJ branch migration. Branch migration allows RuvC to scan DNA until it finds its consensus sequence, where it cleaves and resolves cruciform DNA. The chain is Holliday junction branch migration complex subunit RuvB from Mannheimia succiniciproducens (strain KCTC 0769BP / MBEL55E).